Consider the following 372-residue polypeptide: Alanine racemase (372 aa).

Catalysis depends on K41, which acts as the Proton acceptor; specific for D-alanine. An N6-(pyridoxal phosphate)lysine modification is found at K41. Residue R139 participates in substrate binding. Y268 functions as the Proton acceptor; specific for L-alanine in the catalytic mechanism. M316 is a binding site for substrate.

The protein belongs to the alanine racemase family. It depends on pyridoxal 5'-phosphate as a cofactor.

The enzyme catalyses L-alanine = D-alanine. Its pathway is amino-acid biosynthesis; D-alanine biosynthesis; D-alanine from L-alanine: step 1/1. Functionally, catalyzes the interconversion of L-alanine and D-alanine. May also act on other amino acids. In Borreliella burgdorferi (strain ATCC 35210 / DSM 4680 / CIP 102532 / B31) (Borrelia burgdorferi), this protein is Alanine racemase (alr).